Reading from the N-terminus, the 1117-residue chain is Mitochondrial protein cyt-4 (1117 aa).

The region spanning 561–916 (RQDFYTSTVY…LVHWQIQAAL (356 aa)) is the RNB domain. Positions 705–730 (VVLEVGTPPSAEDEAPTRKMTKPDEL) are disordered. The segment covering 719–730 (APTRKMTKPDEL) has biased composition (basic and acidic residues).

The protein belongs to the RNR ribonuclease family. In terms of assembly, homodimer.

Its subcellular location is the mitochondrion. In terms of biological role, required for RNA 5'- and 3'-end processing and splicing. May act on the RNA processing enzymes directly, or it may act on other regulatory molecules, which influence the activity or synthesis of these enzymes. The sequence is that of Mitochondrial protein cyt-4 (cyt-4) from Neurospora crassa (strain ATCC 24698 / 74-OR23-1A / CBS 708.71 / DSM 1257 / FGSC 987).